Here is a 163-residue protein sequence, read N- to C-terminus: Nucleotide-binding protein YajQ (163 aa).

This sequence belongs to the YajQ family.

In terms of biological role, nucleotide-binding protein. The polypeptide is Nucleotide-binding protein YajQ (Shigella flexneri).